The following is a 161-amino-acid chain: Phosphopantetheine adenylyltransferase (161 aa).

Thr-11 contacts substrate. ATP contacts are provided by residues 11-12 and His-19; that span reads TF. 3 residues coordinate substrate: Lys-43, Thr-75, and Arg-89. ATP is bound by residues 90–92, Glu-100, and 125–131; these read GLR and YSFLSSS.

This sequence belongs to the bacterial CoaD family. As to quaternary structure, homohexamer. Requires Mg(2+) as cofactor.

Its subcellular location is the cytoplasm. The catalysed reaction is (R)-4'-phosphopantetheine + ATP + H(+) = 3'-dephospho-CoA + diphosphate. The protein operates within cofactor biosynthesis; coenzyme A biosynthesis; CoA from (R)-pantothenate: step 4/5. In terms of biological role, reversibly transfers an adenylyl group from ATP to 4'-phosphopantetheine, yielding dephospho-CoA (dPCoA) and pyrophosphate. The protein is Phosphopantetheine adenylyltransferase of Listeria welshimeri serovar 6b (strain ATCC 35897 / DSM 20650 / CCUG 15529 / CIP 8149 / NCTC 11857 / SLCC 5334 / V8).